The primary structure comprises 435 residues: F-box only protein 9 (435 aa).

The interval 1–25 (MAEAEEDCHSDAVRVGDEGHESPAE) is disordered. Over residues 7–25 (DCHSDAVRVGDEGHESPAE) the composition is skewed to basic and acidic residues. A TPR repeat occupies 82-115 (ARELFLKAVEEEQNGALYEAIKFYRRAMQLVPDI). At Ser-124 the chain carries Phosphoserine. Residues 173 to 224 (QTHISVLPMEVLMYIFRWVVSSDLDLRSLEQLSLVCRGFYICARDPEIWRLA) enclose the F-box domain.

In terms of assembly, part of the SCF (SKP1-CUL1-F-box) E3 ubiquitin-protein ligase complex SCF(FBXO9) composed of CUL1, SKP1, RBX1 and FBXO9. Interacts with TTI1 and TELO2; when TTI1 and TELO2 are phosphorylated by CK2.

The protein resides in the cytoplasm. It functions in the pathway protein modification; protein ubiquitination. Its function is as follows. Substrate recognition component of a SCF (SKP1-CUL1-F-box protein) E3 ubiquitin-protein ligase complex which mediates the ubiquitination and subsequent proteasomal degradation of target proteins and plays a role in several biological processes such as cell cycle, cell proliferation, or maintenance of chromosome stability. Ubiquitinates mTORC1-bound TTI1 and TELO2 when they are phosphorylated by CK2 following growth factor deprivation, leading to their degradation. In contrast, does not mediate ubiquitination of TTI1 and TELO2 when they are part of the mTORC2 complex. As a consequence, mTORC1 is inactivated to restrain cell growth and protein translation, while mTORC2 is the activated due to the relief of feedback inhibition by mTORC1. Plays a role in maintaining epithelial cell survival by regulating the turn-over of chromatin modulator PRMT4 through ubiquitination and degradation by the proteasomal pathway. Also regulates PPARgamma stability by facilitating PPARgamma/PPARG ubiquitination and thereby plays a role in adipocyte differentiation. The protein is F-box only protein 9 (Fbxo9) of Rattus norvegicus (Rat).